A 565-amino-acid chain; its full sequence is Proline--tRNA ligase (565 aa).

Belongs to the class-II aminoacyl-tRNA synthetase family. ProS type 1 subfamily. In terms of assembly, homodimer.

Its subcellular location is the cytoplasm. The catalysed reaction is tRNA(Pro) + L-proline + ATP = L-prolyl-tRNA(Pro) + AMP + diphosphate. Its function is as follows. Catalyzes the attachment of proline to tRNA(Pro) in a two-step reaction: proline is first activated by ATP to form Pro-AMP and then transferred to the acceptor end of tRNA(Pro). As ProRS can inadvertently accommodate and process non-cognate amino acids such as alanine and cysteine, to avoid such errors it has two additional distinct editing activities against alanine. One activity is designated as 'pretransfer' editing and involves the tRNA(Pro)-independent hydrolysis of activated Ala-AMP. The other activity is designated 'posttransfer' editing and involves deacylation of mischarged Ala-tRNA(Pro). The misacylated Cys-tRNA(Pro) is not edited by ProRS. The sequence is that of Proline--tRNA ligase from Francisella tularensis subsp. mediasiatica (strain FSC147).